The sequence spans 1287 residues: DNA-directed RNA polymerase subunit beta (1287 aa).

It belongs to the RNA polymerase beta chain family. In terms of assembly, the RNAP catalytic core consists of 2 alpha, 1 beta, 1 beta' and 1 omega subunit. When a sigma factor is associated with the core the holoenzyme is formed, which can initiate transcription.

The enzyme catalyses RNA(n) + a ribonucleoside 5'-triphosphate = RNA(n+1) + diphosphate. In terms of biological role, DNA-dependent RNA polymerase catalyzes the transcription of DNA into RNA using the four ribonucleoside triphosphates as substrates. In Mycoplasma capricolum subsp. capricolum (strain California kid / ATCC 27343 / NCTC 10154), this protein is DNA-directed RNA polymerase subunit beta.